A 92-amino-acid chain; its full sequence is Kinetoplastid membrane protein 11B (92 aa).

It belongs to the KMP-11 family. As to quaternary structure, monomer.

The protein localises to the cytoplasm. It is found in the cytoskeleton. Its subcellular location is the cell projection. It localises to the cilium. The protein resides in the flagellum. Its function is as follows. May be involved in the regulation of the cytoskeleton through interaction with the subpellicular microtubules. May be involved in parasite mobility and attachment to the surface of the host cell. Behaves as a strong immunogen during infection. The polypeptide is Kinetoplastid membrane protein 11B (KMP-11B) (Leishmania infantum).